The following is a 711-amino-acid chain: MRYVVNPQLVLYVEKGQKIKRALYLTPYGTLDDKSPIYYFLSTHLKITDPEVHKRHILLTLKISQLKGYLCDLLRIRNDVIIYSHKNNLEYSYVDNTIFNPFAHTQKKTLIKSDGFLYNIYPDACDFLVIWVADAEDTSIAEFGSYEDVDVNILKFETRLLEVFDDLDLDMTIESKFNNIFRTNLKFTGLRKLIKKINEFNGSRYKSLLYKSDEYFINLTGNKFILTDERLNLTVWDSDGVVTFSSDGDTIMINNVKLFTSLLTDIDLQMERIKGDVTYKIFLSTPITSRIKLNIETSFIFVETATNNILLSADKRISIILAKNHISIKVKNYIPNIEKYFTFLVIAINSMFNNIQQASDFTKVETVYWSRICQNTKNKHRKPVIVSSLDEDMEKVSDNFYKSSTKEVFINSSGIMFSCLDPLNKYNYVGFLSIFYRLQKMCIPCCFLKNQSHTETFSSCVYQKEIASDVINPYILNFGKVVTKSKISFLPIIFDSFFNEGVKIIFEQDNKRLKETIGYHVIKSCDEDIKRLRTISDIIAFVNEDKNILIAEDIIYFPMNYVDIGTRVYILIQEIVHEIVVVKKHMSKDAIEVFPPNYKLVKNLFPRQTKFITIRSDSGMELTTDGFLVDGKEFNVDLSSNYVAFTKNITTPYTLSKYFSPLFKYAITESKNRFMKTWLINTMLRLGIDLDLDTNILPKLEKYYPNHGKSV.

The protein belongs to the poxviridae VETF large subunit family. In terms of assembly, heterodimer of a 70 kDa and a 82 kDa subunit. Part of the early transcription complex composed of ETF, RAP94, and the DNA-directed RNA polymerase.

It is found in the virion. In terms of biological role, acts with RNA polymerase to initiate transcription from early gene promoters. Is recruited by the RPO-associated protein of 94 kDa (RAP94) to form the early transcription complex, which also contains the core RNA polymerase. ETF heterodimer binds to early gene promoters. This is Early transcription factor 82 kDa subunit (VETFL) from Oryctolagus cuniculus (Rabbit).